The chain runs to 858 residues: Leucine--tRNA ligase (858 aa).

Positions Pro-42–His-52 match the 'HIGH' region motif. A 'KMSKS' region motif is present at residues Lys-618–Ser-622. Lys-621 contacts ATP.

Belongs to the class-I aminoacyl-tRNA synthetase family.

The protein resides in the cytoplasm. The catalysed reaction is tRNA(Leu) + L-leucine + ATP = L-leucyl-tRNA(Leu) + AMP + diphosphate. This chain is Leucine--tRNA ligase, found in Aeromonas salmonicida (strain A449).